A 42-amino-acid polypeptide reads, in one-letter code: Omega-theraphotoxin-Asp3a (42 aa).

Disulfide bonds link cysteine 1–cysteine 16, cysteine 8–cysteine 21, and cysteine 15–cysteine 30.

This sequence belongs to the neurotoxin 14 (magi-1) family. 08 (Ltx-4) subfamily. In terms of tissue distribution, expressed by the venom gland.

The protein localises to the secreted. Functionally, inhibits voltage-gated calcium channels (Cav) in rat cerebellar granule cells. The chain is Omega-theraphotoxin-Asp3a from Aphonopelma sp. (American tarantula).